The chain runs to 819 residues: Ion-translocating oxidoreductase complex subunit C (819 aa).

4Fe-4S ferredoxin-type domains lie at 368–398 (EYAEPEAEQACIRCSSCSDACPVNLMPQQLY) and 408–437 (KSEEYALKDCIECGICAYVCPSHIPLIQYF). The [4Fe-4S] cluster site is built by C378, C381, C384, C388, C417, C420, C423, and C427. 2 stretches are compositionally biased toward basic and acidic residues: residues 465-477 (QARMEREEQERKA) and 485-513 (ARREELAQTKGEDPVKAALERLKAKKANE). 3 disordered regions span residues 465–568 (QARM…NAKK), 580–677 (AKKL…TALD), and 692–793 (AKKL…PKKA). 2 stretches are compositionally biased toward polar residues: residues 554 to 565 (VENQEQQTQPTN) and 587 to 601 (NSTSEAISNSQTAEN). The segment covering 602–614 (QVEKTKSAVEKTQ) has biased composition (basic and acidic residues). A compositionally biased stretch (polar residues) spans 641–656 (QTNSTSEAISNSQTAE). Residues 658-671 (EVEKTKSAVEKTEE) show a composition bias toward basic and acidic residues. 2 stretches are compositionally biased toward polar residues: residues 699–712 (NSASEAISNSQTAE) and 755–768 (NSTSEAISNSQTAE). Positions 770-782 (EVEKTKSAVEKTQ) are enriched in basic and acidic residues.

Belongs to the 4Fe4S bacterial-type ferredoxin family. RnfC subfamily. The complex is composed of six subunits: RnfA, RnfB, RnfC, RnfD, RnfE and RnfG. [4Fe-4S] cluster serves as cofactor.

It localises to the cell inner membrane. Its function is as follows. Part of a membrane-bound complex that couples electron transfer with translocation of ions across the membrane. In Haemophilus influenzae (strain ATCC 51907 / DSM 11121 / KW20 / Rd), this protein is Ion-translocating oxidoreductase complex subunit C.